The primary structure comprises 137 residues: Peptide methionine sulfoxide reductase MsrB (137 aa).

A MsrB domain is found at 7 to 129 (AEELKKKLSE…NSASLAFSDE (123 aa)). Zn(2+) is bound by residues cysteine 46, cysteine 49, cysteine 95, and cysteine 98. Cysteine 118 functions as the Nucleophile in the catalytic mechanism.

Belongs to the MsrB Met sulfoxide reductase family. The cofactor is Zn(2+).

It catalyses the reaction L-methionyl-[protein] + [thioredoxin]-disulfide + H2O = L-methionyl-(R)-S-oxide-[protein] + [thioredoxin]-dithiol. This is Peptide methionine sulfoxide reductase MsrB from Salmonella dublin (strain CT_02021853).